The chain runs to 162 residues: Selenoprotein F (162 aa).

Residues methionine 1–alanine 28 form the signal peptide. Position 93 (selenocysteine 93) is a non-standard amino acid, selenocysteine.

Belongs to the selenoprotein M/F family. In terms of assembly, forms a tight complex with UGGT1/UGCGL1. Interacts with UGGT2/UGCGL2. Interacts with RDH11.

Its subcellular location is the endoplasmic reticulum lumen. Its function is as follows. May be involved in redox reactions associated with the formation of disulfide bonds. May contribute to the quality control of protein folding in the endoplasmic reticulum. May regulate protein folding by enhancing the catalytic activity of UGGT1/UGCGL1 and UGGT2/UGCGL2. The protein is Selenoprotein F of Sus scrofa (Pig).